A 45-amino-acid polypeptide reads, in one-letter code: Large ribosomal subunit protein bL34 (45 aa).

Residues 1 to 45 (MTKRTFGGTSRKRKRVSGFRVRMRSHTGRRVIKSRRKRGRDRIAV) form a disordered region. Basic residues predominate over residues 10 to 45 (SRKRKRVSGFRVRMRSHTGRRVIKSRRKRGRDRIAV).

The protein belongs to the bacterial ribosomal protein bL34 family.

The protein is Large ribosomal subunit protein bL34 of Prochlorococcus marinus (strain MIT 9515).